The sequence spans 167 residues: NADH-quinone oxidoreductase subunit B 2 (167 aa).

4 residues coordinate [4Fe-4S] cluster: Cys38, Cys39, Cys104, and Cys133.

It belongs to the complex I 20 kDa subunit family. In terms of assembly, NDH-1 is composed of 14 different subunits. Subunits NuoB, C, D, E, F, and G constitute the peripheral sector of the complex. The cofactor is [4Fe-4S] cluster.

The protein resides in the cell membrane. It carries out the reaction a quinone + NADH + 5 H(+)(in) = a quinol + NAD(+) + 4 H(+)(out). NDH-1 shuttles electrons from NADH, via FMN and iron-sulfur (Fe-S) centers, to quinones in the respiratory chain. The immediate electron acceptor for the enzyme in this species is believed to be ubiquinone. Couples the redox reaction to proton translocation (for every two electrons transferred, four hydrogen ions are translocated across the cytoplasmic membrane), and thus conserves the redox energy in a proton gradient. This is NADH-quinone oxidoreductase subunit B 2 from Roseiflexus sp. (strain RS-1).